We begin with the raw amino-acid sequence, 330 residues long: Ribose-phosphate pyrophosphokinase (330 aa).

55–57 (DGE) provides a ligand contact to ATP. Mg(2+)-binding residues include His-148 and Asp-187. Lys-211 is a catalytic residue. D-ribose 5-phosphate is bound by residues Arg-213, Asp-237, and 241–245 (DTGGT).

It belongs to the ribose-phosphate pyrophosphokinase family. Class I subfamily. As to quaternary structure, homohexamer. Mg(2+) is required as a cofactor.

The protein resides in the cytoplasm. The catalysed reaction is D-ribose 5-phosphate + ATP = 5-phospho-alpha-D-ribose 1-diphosphate + AMP + H(+). Its pathway is metabolic intermediate biosynthesis; 5-phospho-alpha-D-ribose 1-diphosphate biosynthesis; 5-phospho-alpha-D-ribose 1-diphosphate from D-ribose 5-phosphate (route I): step 1/1. Its function is as follows. Involved in the biosynthesis of the central metabolite phospho-alpha-D-ribosyl-1-pyrophosphate (PRPP) via the transfer of pyrophosphoryl group from ATP to 1-hydroxyl of ribose-5-phosphate (Rib-5-P). This is Ribose-phosphate pyrophosphokinase from Nostoc sp. (strain PCC 7120 / SAG 25.82 / UTEX 2576).